Reading from the N-terminus, the 147-residue chain is Probable inactive ribonuclease-like protein 12 (147 aa).

A signal peptide spans 1–20 (MIIMVIIFLVLLFWENEVND).

It belongs to the pancreatic ribonuclease family.

Its subcellular location is the secreted. Functionally, does not exhibit any ribonuclease activity. This chain is Probable inactive ribonuclease-like protein 12 (RNASE12), found in Homo sapiens (Human).